Consider the following 268-residue polypeptide: Protein MGF 300-1L (268 aa).

Topologically, residues Met1–Asn175 are cytoplasmic. Residues Tyr176–Tyr193 form a helical membrane-spanning segment. The Extracellular segment spans residues Thr194–Trp268.

This sequence belongs to the asfivirus MGF 300 family.

The protein resides in the host membrane. Functionally, plays a role in virus cell tropism, and may be required for efficient virus replication in macrophages. This chain is Protein MGF 300-1L, found in African swine fever virus (isolate Tick/South Africa/Pretoriuskop Pr4/1996) (ASFV).